The primary structure comprises 268 residues: uncharacterized protein (268 aa).

This is an uncharacterized protein from Methanocaldococcus jannaschii (strain ATCC 43067 / DSM 2661 / JAL-1 / JCM 10045 / NBRC 100440) (Methanococcus jannaschii).